A 212-amino-acid chain; its full sequence is Pyrrolidone-carboxylate peptidase (212 aa).

Catalysis depends on residues Glu78, Cys141, and His165.

This sequence belongs to the peptidase C15 family. Homotetramer.

It localises to the cytoplasm. It catalyses the reaction Release of an N-terminal pyroglutamyl group from a polypeptide, the second amino acid generally not being Pro.. Its function is as follows. Removes 5-oxoproline from various penultimate amino acid residues except L-proline. The polypeptide is Pyrrolidone-carboxylate peptidase (pcp) (Staphylococcus aureus).